The following is a 487-amino-acid chain: Glutamyl-tRNA(Gln) amidotransferase subunit A (487 aa).

Residues lysine 74 and serine 149 each act as charge relay system in the active site. Serine 173 functions as the Acyl-ester intermediate in the catalytic mechanism.

The protein belongs to the amidase family. GatA subfamily. As to quaternary structure, heterotrimer of A, B and C subunits.

The enzyme catalyses L-glutamyl-tRNA(Gln) + L-glutamine + ATP + H2O = L-glutaminyl-tRNA(Gln) + L-glutamate + ADP + phosphate + H(+). Functionally, allows the formation of correctly charged Gln-tRNA(Gln) through the transamidation of misacylated Glu-tRNA(Gln) in organisms which lack glutaminyl-tRNA synthetase. The reaction takes place in the presence of glutamine and ATP through an activated gamma-phospho-Glu-tRNA(Gln). This is Glutamyl-tRNA(Gln) amidotransferase subunit A from Synechococcus sp. (strain WH7803).